Consider the following 462-residue polypeptide: MTMKRALPSPSSLLFFFLLITPLFLCQENRVSASMPPSESETLFKIMESMSSDQQWRQSHPNPCAPGSSWPGIECKTGPDHLSHVSRLDFGSAPNPSCKSSASFPSSIFTLPFLQSVFFFNCFTHFPTTIMFPIKLIPNSSLQQLSLRSNPSLSGQIPPRISSLKSLQILTLSQNRLTGDIPPAIFSLKSLVHLDLSYNKLTGKIPLQLGNLNNLVGLDLSYNSLTGTIPPTISQLGMLQKLDLSSNSLFGRIPEGVEKLRSLSFMALSNNKLKGAFPKGISNLQSLQYFIMDNNPMFVALPVELGFLPKLQELQLENSGYSGVIPESYTKLTNLSSLSLANNRLTGEIPSGFESLPHVFHLNLSRNLLIGVVPFDSSFLRRLGKNLDLSGNRGLCLNPEDEFSVVKTGVDVCGKNVSSGGGLSVHSSKKKSQASRYYRSCFFANALFPFALFLGLHQRWVL.

A signal peptide spans Met-1–Cys-26. Residues Gln-27 to Cys-441 lie on the Extracellular side of the membrane. Residue Asn-139 is glycosylated (N-linked (GlcNAc...) asparagine). LRR repeat units lie at residues Asn-139–Leu-164, Lys-165–Leu-188, Ser-190–Leu-212, Asn-213–Leu-236, Met-238–Leu-260, Arg-261–Leu-284, Ser-286–Leu-308, Pro-309–Lys-331, Leu-332–Ser-355, and Pro-357–Arg-381. Residues Asn-334, Asn-363, and Asn-416 are each glycosylated (N-linked (GlcNAc...) asparagine). Residues Phe-442–Leu-462 form a helical membrane-spanning segment.

Belongs to the RLP family.

It is found in the cell membrane. The polypeptide is Receptor like protein 29 (Arabidopsis thaliana (Mouse-ear cress)).